Here is a 113-residue protein sequence, read N- to C-terminus: Type III endosome membrane protein TEMP (113 aa).

Residues 1 to 22 are disordered; that stretch reads MNETNKTLVGPSELPTASAVAP. Over 1-29 the chain is Extracellular; the sequence is MNETNKTLVGPSELPTASAVAPGPGTGAR. Residue N5 is glycosylated (N-linked (GlcNAc...) asparagine). A helical; Signal-anchor for type III membrane protein membrane pass occupies residues 30 to 50; it reads AWPVLVGFVLGAVVLSLLIAL. Topologically, residues 51 to 113 are cytoplasmic; sequence AAKCHLCRRY…TEGSRDHFSL (63 aa). Residues 66–113 are disordered; the sequence is HRPLPETGRGGRPQVAEDEDDDGFIEDNYIQPGTGELGTEGSRDHFSL. A compositionally biased stretch (acidic residues) spans 81 to 90; it reads AEDEDDDGFI.

It localises to the membrane. The protein localises to the early endosome. The protein resides in the recycling endosome. Its subcellular location is the cell membrane. May be involved in membrane trafficking between endosomes and plasma membrane. The sequence is that of Type III endosome membrane protein TEMP (C1orf210) from Homo sapiens (Human).